The primary structure comprises 50 residues: Conotoxin Bu13 (50 aa).

Residue Ala-1 is a signal peptide. Positions 2–24 are excised as a propeptide; sequence EDSRGTQLHRALRKTTKLSLSIR. Disulfide bonds link Cys-25–Cys-40, Cys-32–Cys-44, and Cys-39–Cys-49.

Belongs to the conotoxin O1 superfamily. In terms of tissue distribution, expressed by the venom duct.

The protein localises to the secreted. This is Conotoxin Bu13 from Conus bullatus (Bubble cone).